We begin with the raw amino-acid sequence, 65 residues long: Translational regulator CsrA (65 aa).

It belongs to the CsrA/RsmA family. As to quaternary structure, homodimer; the beta-strands of each monomer intercalate to form a hydrophobic core, while the alpha-helices form wings that extend away from the core.

It localises to the cytoplasm. A key translational regulator that binds mRNA to regulate translation initiation and/or mRNA stability. Mediates global changes in gene expression, shifting from rapid growth to stress survival by linking envelope stress, the stringent response and the catabolite repression systems. Usually binds in the 5'-UTR; binding at or near the Shine-Dalgarno sequence prevents ribosome-binding, repressing translation, binding elsewhere in the 5'-UTR can activate translation and/or stabilize the mRNA. Its function is antagonized by small RNA(s). In Pseudomonas putida (strain ATCC 47054 / DSM 6125 / CFBP 8728 / NCIMB 11950 / KT2440), this protein is Translational regulator CsrA.